An 876-amino-acid polypeptide reads, in one-letter code: Alanine--tRNA ligase (876 aa).

Residues His-566, His-570, Cys-668, and His-672 each coordinate Zn(2+).

This sequence belongs to the class-II aminoacyl-tRNA synthetase family. Requires Zn(2+) as cofactor.

The protein localises to the cytoplasm. It catalyses the reaction tRNA(Ala) + L-alanine + ATP = L-alanyl-tRNA(Ala) + AMP + diphosphate. In terms of biological role, catalyzes the attachment of alanine to tRNA(Ala) in a two-step reaction: alanine is first activated by ATP to form Ala-AMP and then transferred to the acceptor end of tRNA(Ala). Also edits incorrectly charged Ser-tRNA(Ala) and Gly-tRNA(Ala) via its editing domain. The polypeptide is Alanine--tRNA ligase (Petrotoga mobilis (strain DSM 10674 / SJ95)).